The following is a 442-amino-acid chain: Coiled-coil domain-containing protein 91 (442 aa).

The segment at 1–16 (MDDDDFGGFEAAETFD) is GGA1-binding motif. A disordered region spans residues 1 to 27 (MDDDDFGGFEAAETFDGEQGGNQAVSP). Phosphoserine occurs at positions 43 and 46. Positions 48–79 (ELILDHDRSSPSSGHLRSDAVISSPDDTRADS) are disordered. 2 coiled-coil regions span residues 127–213 (GVHV…ALSI) and 248–409 (CEEL…RLDQ). The segment at 211–414 (LSIIVDEYKA…RRLDQVTRQR (204 aa)) is homodimerization.

In terms of assembly, homodimer. Interacts with GGA1, GGA2 and AP1G1.

Its subcellular location is the membrane. It localises to the golgi apparatus. The protein localises to the trans-Golgi network membrane. It is found in the trans-Golgi network. Functionally, involved in the regulation of membrane traffic through the trans-Golgi network (TGN). Functions in close cooperation with the GGAs in the sorting of hydrolases to lysosomes. This chain is Coiled-coil domain-containing protein 91 (Ccdc91), found in Rattus norvegicus (Rat).